A 554-amino-acid chain; its full sequence is Valerianol synthase TPS1C (554 aa).

Positions 307 and 311 each coordinate Mg(2+). A DDXXD motif motif is present at residues 326–330 (VQRWD). Asp-452, Ser-456, and Glu-460 together coordinate Mg(2+).

This sequence belongs to the terpene synthase family. Mg(2+) is required as a cofactor.

The catalysed reaction is (2E,6E)-farnesyl diphosphate + H2O = valerianol + diphosphate. It functions in the pathway secondary metabolite biosynthesis; terpenoid biosynthesis. Terpene synthase that catalyzes the biosynthesis of the terpene valerianol, which is a volatile compound of floral scent. The polypeptide is Valerianol synthase TPS1C (Camellia hiemalis (Camellia)).